Reading from the N-terminus, the 300-residue chain is Ribosomal RNA small subunit methyltransferase H (300 aa).

Residues 33-35, Asp52, Phe86, Asp97, and Gln104 contribute to the S-adenosyl-L-methionine site; that span reads AGH.

This sequence belongs to the methyltransferase superfamily. RsmH family.

Its subcellular location is the cytoplasm. It catalyses the reaction cytidine(1402) in 16S rRNA + S-adenosyl-L-methionine = N(4)-methylcytidine(1402) in 16S rRNA + S-adenosyl-L-homocysteine + H(+). Specifically methylates the N4 position of cytidine in position 1402 (C1402) of 16S rRNA. This chain is Ribosomal RNA small subunit methyltransferase H, found in Aliarcobacter butzleri (strain RM4018) (Arcobacter butzleri).